The primary structure comprises 210 residues: MKGKFIVIEGLEGAGKSSAHQSVVRVLHELAIQDVVFTREPGGTPLAEKLRHLIKHETEEPVTHKAELLMLYAARIQLVDNVIKPALMQGKWVVGDRHDMSSQAYQGGGRQLDPHFMLTLKETVLGDFEPDLTIYLDIDPIVGLARARGRGELDRIEQMDLDFFHRTRARYLELVKDNPKAVMINAEQSIELVQADIERAVKNWWKSNEK.

10–17 (GLEGAGKS) is a binding site for ATP.

It belongs to the thymidylate kinase family.

It carries out the reaction dTMP + ATP = dTDP + ADP. Phosphorylation of dTMP to form dTDP in both de novo and salvage pathways of dTTP synthesis. In Haemophilus influenzae (strain PittEE), this protein is Thymidylate kinase.